Consider the following 276-residue polypeptide: Checkpoint protein HUS1B (276 aa).

Belongs to the HUS1 family. Interacts with RAD1 and RAD9B.

The chain is Checkpoint protein HUS1B (Hus1b) from Mus musculus (Mouse).